The chain runs to 929 residues: Lon protease homolog 2, peroxisomal (929 aa).

A Lon N-terminal domain is found at 11-257 (LPLVPLPKGS…RVVEILTRQL (247 aa)). A disordered region spans residues 302–325 (GLTPPGLSAGRNNDNDDKESNEVD). Residue 484-491 (GPPGVGKT) participates in ATP binding. Residues 727-914 (HGRPGVVTGL…WEAIRQVWPD (188 aa)) form the Lon proteolytic domain. Active-site residues include Ser-820 and Lys-863. A Microbody targeting signal motif is present at residues 927 to 929 (SRL).

This sequence belongs to the peptidase S16 family.

Its subcellular location is the peroxisome matrix. It catalyses the reaction Hydrolysis of proteins in presence of ATP.. Functionally, ATP-dependent serine protease that mediates the selective degradation of misfolded and unassembled polypeptides in the peroxisomal matrix. Necessary for type 2 peroxisome targeting signal (PTS2)-containing protein processing and facilitates peroxisome matrix protein import. In Aspergillus niger (strain ATCC MYA-4892 / CBS 513.88 / FGSC A1513), this protein is Lon protease homolog 2, peroxisomal.